The chain runs to 206 residues: MKVKICGVTHPEDAEYAALLGADYIGMIFAEKSKRKTSLSMAKSITNTTKRLGAEPVGVFVEQTTDQIIAICEQTGIKTVQLHNSFPSGSLEKLLRDYSIIYAISVRENGDVCHPQSLPPKVIPLYDTEKGGTGKQFNWKAFSSPRDTFWMLAGGLNPANIEEAIATLHPNGVDVATGVEFPNKTRKDPDLLKAFIQSAKILGEKI.

The protein belongs to the TrpF family.

It catalyses the reaction N-(5-phospho-beta-D-ribosyl)anthranilate = 1-(2-carboxyphenylamino)-1-deoxy-D-ribulose 5-phosphate. Its pathway is amino-acid biosynthesis; L-tryptophan biosynthesis; L-tryptophan from chorismate: step 3/5. This Chlamydia felis (strain Fe/C-56) (Chlamydophila felis) protein is N-(5'-phosphoribosyl)anthranilate isomerase.